A 183-amino-acid chain; its full sequence is Large ribosomal subunit protein bL32m (183 aa).

Residues 1-71 constitute a mitochondrion transit peptide; that stretch reads MNSLIFGKQL…DFFSNNGILL (71 aa). Zn(2+) is bound by residues Cys104, Cys107, Cys117, and Cys120.

The protein belongs to the bacterial ribosomal protein bL32 family. Component of the mitochondrial large ribosomal subunit (mt-LSU). Mature yeast 74S mitochondrial ribosomes consist of a small (37S) and a large (54S) subunit. The 37S small subunit contains a 15S ribosomal RNA (15S mt-rRNA) and 34 different proteins. The 54S large subunit contains a 21S rRNA (21S mt-rRNA) and 46 different proteins. bL32m has a zinc binding site. MRPL32 precursor is processed by the m-AAA protease (composed of YTA12/RCA1 and YTA10/AFG3), which cleaves the N-terminal transit peptide. Cleavage by the m-AAA protease takes place prior to assembly into the large subunit, an essential step for mitochondrial ribosome (mitoribosome) assembly. Proper processing by the m-AAA protease is dependent on the zinc-binding region within the tightly folded C-terminal domain of MRPL32: zinc-dependent folding halts degradation initiated from the N-terminus and triggers the release of mature MRPL32.

It is found in the mitochondrion. Component of the mitochondrial ribosome (mitoribosome), a dedicated translation machinery responsible for the synthesis of mitochondrial genome-encoded proteins, including at least some of the essential transmembrane subunits of the mitochondrial respiratory chain. The mitoribosomes are attached to the mitochondrial inner membrane and translation products are cotranslationally integrated into the membrane. The polypeptide is Large ribosomal subunit protein bL32m (Saccharomyces cerevisiae (strain ATCC 204508 / S288c) (Baker's yeast)).